Reading from the N-terminus, the 372-residue chain is Putative glutamate--cysteine ligase 2 (372 aa).

It belongs to the glutamate--cysteine ligase type 2 family. YbdK subfamily.

The catalysed reaction is L-cysteine + L-glutamate + ATP = gamma-L-glutamyl-L-cysteine + ADP + phosphate + H(+). Functionally, ATP-dependent carboxylate-amine ligase which exhibits weak glutamate--cysteine ligase activity. The sequence is that of Putative glutamate--cysteine ligase 2 from Gloeobacter violaceus (strain ATCC 29082 / PCC 7421).